The sequence spans 354 residues: MVKVINNFVKVNQYDRPGLKLAAVKGIVMHWTATPGASALNERNYFNGTCIADKRYASAHYFVDRHEAQHIIPDHEVAYHAHDQNRCYVSFLKPNANTTALGVEMCVEKDGTIHEETIRNAAELVADLCKTYGLSADRIVRHYDVTNKGCPTPWVRDAGQLSAFRKRVDSLLGRKTVSVSAASTSQTSSSSGIILKKGMSGSHVKKLQTRLVAAGFSLPKYGADGSYGDETVHAVVSLQKKAGIKADGIYGPSTEKALSAAEASAAGKSKTWTLPDGIYKVKNPLMKGTAVTQIQTALAALYYYPDKGAKNNGIDGYYGMKTANAVKRFQLMYGLGADGIYGPKTKAKMLSLLK.

An N-terminal signal peptide occupies residues 1–39 (MVKVINNFVKVNQYDRPGLKLAAVKGIVMHWTATPGASA). The N-acetylmuramoyl-L-alanine amidase domain maps to 40–152 (LNERNYFNGT…YDVTNKGCPT (113 aa)).

The protein belongs to the N-acetylmuramoyl-L-alanine amidase 2 family.

It is found in the secreted. The catalysed reaction is Hydrolyzes the link between N-acetylmuramoyl residues and L-amino acid residues in certain cell-wall glycopeptides.. This Bacillus licheniformis protein is Probable N-acetylmuramoyl-L-alanine amidase.